Reading from the N-terminus, the 102-residue chain is Small ribosomal subunit protein uS10 (102 aa).

Belongs to the universal ribosomal protein uS10 family. In terms of assembly, part of the 30S ribosomal subunit.

Functionally, involved in the binding of tRNA to the ribosomes. The sequence is that of Small ribosomal subunit protein uS10 from Lactiplantibacillus plantarum (strain ATCC BAA-793 / NCIMB 8826 / WCFS1) (Lactobacillus plantarum).